Here is a 218-residue protein sequence, read N- to C-terminus: Small ribosomal subunit protein uS3c (218 aa).

Residues 47–118 (VYKNIRNSSN…KLRMTLTEVT (72 aa)) form the KH type-2 domain.

The protein belongs to the universal ribosomal protein uS3 family. Part of the 30S ribosomal subunit.

The protein resides in the plastid. It localises to the chloroplast. The polypeptide is Small ribosomal subunit protein uS3c (rps3) (Physcomitrium patens (Spreading-leaved earth moss)).